The chain runs to 404 residues: CD2 homolog (404 aa).

A signal peptide spans 1 to 16; the sequence is MFITLIFLSYINIVLS. Residues 17–225 lie on the Extracellular side of the membrane; it reads NNYWARLNET…QNYFLENIHT (209 aa). 10 N-linked (GlcNAc...) asparagine; by host glycosylation sites follow: N24, N87, N92, N96, N122, N139, N167, N193, N200, and N206. 2 disulfide bridges follow: C140/C207 and C147/C190. Residues 226-246 traverse the membrane as a helical segment; sequence LFYIIIFIVSGLIASIFISII. Residues 247 to 404 lie on the Cytoplasmic side of the membrane; it reads TFLSLRKRKK…ISLIHVDRII (158 aa). The segment at 260–295 is disordered; the sequence is EIESPPPESNEEEQCQHDDTTSIHEPSPREPLLPKP. Over residues 273–287 the composition is skewed to basic and acidic residues; sequence QCQHDDTTSIHEPSP. 7 tandem repeats follow at residues 322 to 327, 328 to 333, 334 to 339, 340 to 345, 346 to 351, 352 to 357, and 358 to 363. Residues 322–363 are 7 X 6 AA tandem repeats of [KN]-P-C-P-P-P; that stretch reads NPCPPPKPCPPPKPCPPPKPCPPPKPCPPPKPCPPPKPCPPP. The segment covering 357-388 has biased composition (pro residues); sequence PKPCPPPKPCSSPESYSPPKPLPSIPLLPNIP. Positions 357-390 are disordered; the sequence is PKPCPPPKPCSSPESYSPPKPLPSIPLLPNIPPL.

It belongs to the asfivirus CD2 homolog protein family. Both glycosylated and nonglycosylated forms interact (via C-terminus) with the host AP-1 complex. In terms of processing, cleaved into two fragments of 63 kDa and 26 kDa containing respectively the glycosylated N-terminus and the nonglycosylated C-terminus. A full-length 89-kDa glycosylated form also exists.

The protein resides in the host membrane. Its subcellular location is the virion membrane. The protein localises to the host Golgi apparatus. May play an immunosuppressive role by inhibiting lymphocyte proliferation and subsequently facilitating viral replication and generalization of infection. Responsible for viral hemadsorption, which may help viral spread. Increases virus replication in the tick vector at the step of virus uptake or replication in the tick gut. May play a role in the host Golgi reorganization to yield viral factories. May play a role in host cell penetration. This chain is CD2 homolog, found in African swine fever virus (isolate Tick/South Africa/Pretoriuskop Pr4/1996) (ASFV).